Here is a 75-residue protein sequence, read N- to C-terminus: Small capsomere-interacting protein (75 aa).

The protein belongs to the herpesviridae small capsomere-interacting protein family. In terms of assembly, interacts with the major capsid protein/MCP.

It localises to the virion. It is found in the host nucleus. Its function is as follows. Participates in the assembly of the infectious particles by decorating the outer surface of the capsid shell and thus forming a layer between the capsid and the tegument. Complexes composed of the capsid protein VP5 and UL48A assemble together in the host cytoplasm and are translocated to the nucleus, where they accumulate and participate in capsid assembly. Functionally, participates in the assembly of the infectious particles by decorating the outer surface of the capsid shell and thus forming a layer between the capsid and the tegument. Complexes composed of the major capsid protein and small capsomere-interacting protein/SCP assemble together in the host cytoplasm and are translocated to the nucleus, where they accumulate and participate in capsid assembly. The polypeptide is Small capsomere-interacting protein (Homo sapiens (Human)).